We begin with the raw amino-acid sequence, 370 residues long: Dual-specificity RNA methyltransferase RlmN (370 aa).

The active-site Proton acceptor is E93. The Radical SAM core domain occupies 99–337 (EEGRGTLCVS…VTTVRKTRGD (239 aa)). Residues C106 and C343 are joined by a disulfide bond. [4Fe-4S] cluster is bound by residues C113, C117, and C120. S-adenosyl-L-methionine is bound by residues 167-168 (GE), S199, 221-223 (SLH), and N300. Catalysis depends on C343, which acts as the S-methylcysteine intermediate.

Belongs to the radical SAM superfamily. RlmN family. It depends on [4Fe-4S] cluster as a cofactor.

The protein localises to the cytoplasm. The enzyme catalyses adenosine(2503) in 23S rRNA + 2 reduced [2Fe-2S]-[ferredoxin] + 2 S-adenosyl-L-methionine = 2-methyladenosine(2503) in 23S rRNA + 5'-deoxyadenosine + L-methionine + 2 oxidized [2Fe-2S]-[ferredoxin] + S-adenosyl-L-homocysteine. It catalyses the reaction adenosine(37) in tRNA + 2 reduced [2Fe-2S]-[ferredoxin] + 2 S-adenosyl-L-methionine = 2-methyladenosine(37) in tRNA + 5'-deoxyadenosine + L-methionine + 2 oxidized [2Fe-2S]-[ferredoxin] + S-adenosyl-L-homocysteine. Specifically methylates position 2 of adenine 2503 in 23S rRNA and position 2 of adenine 37 in tRNAs. m2A2503 modification seems to play a crucial role in the proofreading step occurring at the peptidyl transferase center and thus would serve to optimize ribosomal fidelity. In Francisella tularensis subsp. novicida (strain U112), this protein is Dual-specificity RNA methyltransferase RlmN.